A 466-amino-acid chain; its full sequence is tRNA-2-methylthio-N(6)-dimethylallyladenosine synthase (466 aa).

Positions 2-118 (KRFYIHTIGC…LPGHIQAVAH (117 aa)) constitute an MTTase N-terminal domain. 6 residues coordinate [4Fe-4S] cluster: Cys-11, Cys-47, Cys-81, Cys-157, Cys-161, and Cys-164. The Radical SAM core domain maps to 143-372 (DSSGVTGFIT…LELQNRITAE (230 aa)). Residues 375–453 (RALEGRVEQV…AHSLSGIAVG (79 aa)) enclose the TRAM domain.

Belongs to the methylthiotransferase family. MiaB subfamily. As to quaternary structure, monomer. The cofactor is [4Fe-4S] cluster.

Its subcellular location is the cytoplasm. The catalysed reaction is N(6)-dimethylallyladenosine(37) in tRNA + (sulfur carrier)-SH + AH2 + 2 S-adenosyl-L-methionine = 2-methylsulfanyl-N(6)-dimethylallyladenosine(37) in tRNA + (sulfur carrier)-H + 5'-deoxyadenosine + L-methionine + A + S-adenosyl-L-homocysteine + 2 H(+). In terms of biological role, catalyzes the methylthiolation of N6-(dimethylallyl)adenosine (i(6)A), leading to the formation of 2-methylthio-N6-(dimethylallyl)adenosine (ms(2)i(6)A) at position 37 in tRNAs that read codons beginning with uridine. The polypeptide is tRNA-2-methylthio-N(6)-dimethylallyladenosine synthase (Desulfosudis oleivorans (strain DSM 6200 / JCM 39069 / Hxd3) (Desulfococcus oleovorans)).